A 597-amino-acid polypeptide reads, in one-letter code: Arginine--tRNA ligase (597 aa).

The 'HIGH' region motif lies at P125–H135.

The protein belongs to the class-I aminoacyl-tRNA synthetase family. In terms of assembly, monomer.

Its subcellular location is the cytoplasm. It catalyses the reaction tRNA(Arg) + L-arginine + ATP = L-arginyl-tRNA(Arg) + AMP + diphosphate. This Porphyromonas gingivalis (strain ATCC 33277 / DSM 20709 / CIP 103683 / JCM 12257 / NCTC 11834 / 2561) protein is Arginine--tRNA ligase.